We begin with the raw amino-acid sequence, 512 residues long: Glutathione-binding protein GsiB (512 aa).

The first 26 residues, 1–26, serve as a signal peptide directing secretion; that stretch reads MARAVHRSGLVALGIATALMASCAFA.

It belongs to the bacterial solute-binding protein 5 family. The complex is composed of two ATP-binding proteins (GsiA), two transmembrane proteins (GsiC and GsiD) and a solute-binding protein (GsiB).

The protein resides in the periplasm. In terms of biological role, part of the ABC transporter complex GsiABCD involved in glutathione import. Binds glutathione. This is Glutathione-binding protein GsiB from Shigella boydii serotype 4 (strain Sb227).